The following is a 152-amino-acid chain: uncharacterized protein (152 aa).

This is an uncharacterized protein from Methanocaldococcus jannaschii (strain ATCC 43067 / DSM 2661 / JAL-1 / JCM 10045 / NBRC 100440) (Methanococcus jannaschii).